The following is a 127-amino-acid chain: Prophage antitermination protein Q homolog QuuD (127 aa).

The protein belongs to the phage antitermination Q type 1 family.

Positively regulate expression of some phage genes. Bacterial host RNA polymerase modified by antitermination proteins transcribes through termination sites that otherwise prevent expression of the regulated genes. This chain is Prophage antitermination protein Q homolog QuuD (quuD), found in Escherichia coli (strain K12).